The sequence spans 427 residues: MESLTLQPIARVDGTINLPGSKSVSNRALLLAALAHGKTVLTNLLDSDDVRHMLNALTALGVSYTLSADRTRCEIIGNGGPLHAEGALELFLGNAGTAMRPLAAALCLGSNDIVLTGEPRMKERPIGHLVDALRLGGAKITYLEQENYPPLRLQGGFTGGNVDVDGSVSSQFLTALLMNAPLAPEDTVIRIKGDLVSKPYIDITLNLMKTFGVEIENQHYQQFVVKGGQSYQSPGTYLVEGDASSASYFLAAAAIKGGTVKVTGIGRNSMQGDIRFADVLEKMGATICWGDDYISCTRGELNAIDMDMNHIPDAAMTIATAALFAKGTTTLRNIYNWRVKETDRLFAMATELRKVGAEVEEGHDYIRITPPEKLNFAEIATYNDHRMAMCFSLVALSDTPVTILDPKCTAKTFPDYFEQLARISQAA.

3-phosphoshikimate-binding residues include Lys22, Ser23, and Arg27. Lys22 provides a ligand contact to phosphoenolpyruvate. 2 residues coordinate phosphoenolpyruvate: Gly96 and Arg124. 3-phosphoshikimate-binding residues include Ser169, Ser170, Gln171, Ser197, Asp313, Asn336, and Lys340. Residue Gln171 participates in phosphoenolpyruvate binding. Residue Asp313 is the Proton acceptor of the active site. The phosphoenolpyruvate site is built by Arg344, Arg386, and Lys411.

Belongs to the EPSP synthase family. In terms of assembly, monomer.

The protein resides in the cytoplasm. It carries out the reaction 3-phosphoshikimate + phosphoenolpyruvate = 5-O-(1-carboxyvinyl)-3-phosphoshikimate + phosphate. Its pathway is metabolic intermediate biosynthesis; chorismate biosynthesis; chorismate from D-erythrose 4-phosphate and phosphoenolpyruvate: step 6/7. Its function is as follows. Catalyzes the transfer of the enolpyruvyl moiety of phosphoenolpyruvate (PEP) to the 5-hydroxyl of shikimate-3-phosphate (S3P) to produce enolpyruvyl shikimate-3-phosphate and inorganic phosphate. This chain is 3-phosphoshikimate 1-carboxyvinyltransferase, found in Shigella sonnei.